We begin with the raw amino-acid sequence, 290 residues long: MEELINKAQTLVEALPYIRNFYGKTFVIKYGGSTMGDKRLKEKIMEDITLLKYVGVNPVLIHGGGPAISEAMESMDKEARFIQGLRITDSETMSLVEMVLVGKVNKELVSIINRLGGEAVGICGKDGGLIEADKLIFEDKSIDLGHVGSVKKINPEIVLNLIKGGYIPVISPVGSSKEGDTYNINADTVAGKLAVSLKAEKLIFLTDVDGVWSDPSNEKTRVSSLTVNEVKSWIGEGKIKGGMVPKVEACIEAVTCGVNRTHILNGLIPHALLLEIFTDRGIGTMILKER.

Residues 64 to 65 (GG), R86, and N183 contribute to the substrate site.

The protein belongs to the acetylglutamate kinase family. ArgB subfamily.

It localises to the cytoplasm. The catalysed reaction is N-acetyl-L-glutamate + ATP = N-acetyl-L-glutamyl 5-phosphate + ADP. The protein operates within amino-acid biosynthesis; L-arginine biosynthesis; N(2)-acetyl-L-ornithine from L-glutamate: step 2/4. Catalyzes the ATP-dependent phosphorylation of N-acetyl-L-glutamate. In Halothermothrix orenii (strain H 168 / OCM 544 / DSM 9562), this protein is Acetylglutamate kinase.